A 283-amino-acid chain; its full sequence is Nucleotide-binding protein Sama_3091 (283 aa).

Residue 8–15 coordinates ATP; the sequence is GRSGSGKS. GTP is bound at residue 56–59; sequence DIRN.

It belongs to the RapZ-like family.

Functionally, displays ATPase and GTPase activities. This Shewanella amazonensis (strain ATCC BAA-1098 / SB2B) protein is Nucleotide-binding protein Sama_3091.